The chain runs to 228 residues: Probable calcium-binding protein CML48 (228 aa).

EF-hand domains follow at residues 52-87 and 121-156; these read ETHP…SGYD and NCLA…LGCV. Residues Asp65, Asn67, Ser69, and Glu76 each coordinate Ca(2+).

Functionally, potential calcium sensor. This chain is Probable calcium-binding protein CML48 (CML48), found in Arabidopsis thaliana (Mouse-ear cress).